A 241-amino-acid chain; its full sequence is Methylthioribulose-1-phosphate dehydratase (241 aa).

Residue cysteine 96 participates in substrate binding. Zn(2+)-binding residues include histidine 114 and histidine 116. The active-site Proton donor/acceptor is glutamate 138. Histidine 194 serves as a coordination point for Zn(2+).

The protein belongs to the aldolase class II family. MtnB subfamily. In terms of assembly, homotetramer. Interacts with APAF1. May interact with CASP1. Requires Zn(2+) as cofactor. Expressed in skeletal muscle (at protein level).

The protein localises to the cytoplasm. It carries out the reaction 5-(methylsulfanyl)-D-ribulose 1-phosphate = 5-methylsulfanyl-2,3-dioxopentyl phosphate + H2O. It participates in amino-acid biosynthesis; L-methionine biosynthesis via salvage pathway; L-methionine from S-methyl-5-thio-alpha-D-ribose 1-phosphate: step 2/6. Its function is as follows. Catalyzes the dehydration of methylthioribulose-1-phosphate (MTRu-1-P) into 2,3-diketo-5-methylthiopentyl-1-phosphate (DK-MTP-1-P). Functions in the methionine salvage pathway, which plays a key role in cancer, apoptosis, microbial proliferation and inflammation. May inhibit the CASP1-related inflammatory response (pyroptosis), the CASP9-dependent apoptotic pathway and the cytochrome c-dependent and APAF1-mediated cell death. The protein is Methylthioribulose-1-phosphate dehydratase of Mus musculus (Mouse).